We begin with the raw amino-acid sequence, 393 residues long: F-box/kelch-repeat protein At4g19865 (393 aa).

The segment at 1–30 (MNFQVEPPEKKKTKNSSPPHSPPSSSSPSL) is disordered. An F-box domain is found at 27–73 (SPSLSLLPEEIVVHCLARISRLYYPTLSLVSKSFRSILSSTELYATR). Kelch repeat units lie at residues 148-190 (EIYV…FHDG), 191-237 (KIYV…RSGV), 239-272 (EGKIEFGNVNEMCAYDTKLCKWEYCVNKSAALRS), and 273-320 (ECMI…GGSS).

The chain is F-box/kelch-repeat protein At4g19865 from Arabidopsis thaliana (Mouse-ear cress).